The following is a 78-amino-acid chain: MRNTISSKMGQVLIVLLLLCTVLCRTESALPSGQHSVLLTGRRLMGSGASGPVRSSQSSQAGGRFNDADPIAIDYGKY.

Residues 1–24 (MRNTISSKMGQVLIVLLLLCTVLC) form the signal peptide. The propeptide at 25–43 (RTESALPSGQHSVLLTGRR) is removed in mature form. Residues 47 to 78 (SGASGPVRSSQSSQAGGRFNDADPIAIDYGKY) are disordered. Residues 50-64 (SGPVRSSQSSQAGGR) carry the SCOOP motif motif. A SxS motif essential for MIK2 binding motif is present at residues 56 to 58 (SQS).

It belongs to the serine rich endogenous peptide (SCOOP) phytocytokine family. As to quaternary structure, interacts with MIK2 (via extracellular leucine-rich repeat domain); this interaction triggers the formation of complex between MIK2 and the BAK1/SERK3 and SERK4 coreceptors, and subsequent BAK1 activation by phosphorylation on 'Ser-612'. As to expression, mostly expressed in the whole root system, and, to a lower extent, in seedlings shoots.

Its subcellular location is the cell membrane. It localises to the secreted. The protein resides in the extracellular space. The protein localises to the apoplast. Brassicaceae-specific phytocytokine (plant endogenous peptide released into the apoplast) perceived by MIK2 in a BAK1/SERK3 and SERK4 coreceptors-dependent manner, that modulates various physiological and antimicrobial processes including root growth prevention, phospholipid signaling pathway activation (e.g. accumulation of phosphatidic acid (PA), but transient reduction of phosphatidylinositol 4,5-bisphosphate (PIP(2)) levels) and reactive oxygen species (ROS) response regulation. Moderates primary root growth, and regulates root meristems and cell elongation; this root growth regulation is associated with the modulation of ROS metabolism and alteration of cell wall structure, and depends on variations in many genes expression. Promotes ROS (e.g. superoxide anion O(2) and hydrogen peroxide H(2)O(2)) production and MAPK (e.g. MPK3, MPK4 and MPK6) activation in a MIK2-dependent manner, thus leading to the up-regulation of immune-related marker genes (e.g. WRKY30, WRKY33 and CYP81F2). Involved in biotic and oxidative stress responses; acts as a negative regulator of defense against necrotrophic pathogens such as the bacteria Erwinia amylovora and the fungus Alternaria brassicicola. Able to prime defense responses against the pathogenic bacteria Pseudomonas syringae pv. tomato DC3000. Contributes to the triggering of defense responses toward generalist herbivores such as Spodoptera littoralis, probably via the activation of jasmonate and indole glucosinolate biosynthesis. Triggers the expression of several PROSCOOP genes (e.g. PROSCOOP3, PROSCOOP7, PROSCOOP12 and PROSCOOP13). This chain is Serine rich endogenous peptide 12, found in Arabidopsis thaliana (Mouse-ear cress).